We begin with the raw amino-acid sequence, 479 residues long: FAD-dependent monooxygenase sdcF (479 aa).

Residues A40 to T213 form the FAD-binding PCMH-type domain. At H79 the chain carries Pros-8alpha-FAD histidine.

This sequence belongs to the oxygen-dependent FAD-linked oxidoreductase family. The cofactor is FAD.

It participates in secondary metabolite biosynthesis. Functionally, FAD-dependent monooxygenase; part of the gene cluster that mediates the biosynthesis of the polyenes aspernidgulenes. The carbon backbone of aspernidgulenes is synthesized by the HR-PKS sdgA, which accepts acetyl-CoA as the starter unit and performs malonyl-CoA extensions as well as regioselective methylation and reduction. The resulting nonaketide offloads the HR-PKS by intramolecular lactonization to yield the 5,6-dihydro-alpha-pyrone-containing hexaenoic acids preaspernidgulene A1 and A2. The FAD-dependent monooxygenase sdgC then installs the first epoxide on the penultimate double bond. Subsequently, the FAD-dependent monooxygenase sdgF presumably generates a ketone intermediate through Meinwald rearrangement involving a hydride shift. Next, sdgC introduces another epoxide on the last olefin of the ketone intermediate after E/Z isomerization. The epoxide hydrolase sdgD then catalyzes stereospecific cyclization of the 5,6-dihydro-alpha-pyrone and opening of the epoxide ring to form an oxygenated trimethylcyclopentanone and an oxabicyclo[2.2.1]heptane unit. Finally, the bicyclic unit undergoes hydrolytic cleavage, either spontaneously or catalyzed by sdgD, to assemble the dimethyl-gamma-lactone moiety in aspernidgulene A1. The chain is FAD-dependent monooxygenase sdcF from Emericella nidulans (strain FGSC A4 / ATCC 38163 / CBS 112.46 / NRRL 194 / M139) (Aspergillus nidulans).